We begin with the raw amino-acid sequence, 1227 residues long: Beta-alanyl-bioamine nonribosomal peptide synthetase (1227 aa).

An adenylation region spans residues 1–850 (MPQSTAQLKS…FGKNSRDFKL (850 aa)). Residues 851–931 (SRGRERARKV…SILTSLQNTE (81 aa)) enclose the Carrier domain. Serine 892 is modified (O-(pantetheine 4'-phosphoryl)serine). Positions 932 to 1227 (SDFLKTQEPF…YMIKELNPSS (296 aa)) are condensation.

Belongs to the NRP synthetase family. Pantetheine 4'-phosphate serves as cofactor. As to expression, in virgin and paired males, bilaterally expressed in some cells in the head. During pairing, expressed throughout the ventral side of the body probably in ciliated neurons. Highly expressed in virgin females in cells throughout the body and only weakly expressed in sexually mature females. In virgin females, expressed in some cells in the head and on the dorsal surface and lateral edges of body.

It carries out the reaction tryptamine + beta-alanine + ATP = beta-alanyl-tryptamine + AMP + diphosphate + H(+). The catalysed reaction is beta-alanine + ATP + H(+) = beta-alanyl-5'-AMP + diphosphate. It catalyses the reaction beta-alanyl-5'-AMP + holo-[peptidyl-carrier protein] = beta-alanyl-[peptidyl-carrier protein] + AMP + H(+). The enzyme catalyses beta-alanyl-[peptidyl-carrier protein] + tryptamine = beta-alanyl-tryptamine + holo-[peptidyl-carrier protein] + H(+). Functionally, catalyzes the condensation of beta-alanine with tryptamine to form beta-alanyl-tryptamine (BATT). Beta-alanyl-tryptamine is an essential pheromone produced by the male that stimulates female sexual development during pairing. In Schistosoma mansoni (Blood fluke), this protein is Beta-alanyl-bioamine nonribosomal peptide synthetase.